The chain runs to 517 residues: Cytochrome P450 monooxygenase polD (517 aa).

Residues 5-27 (VVLVGIVVLVLAYLSSTGKVYPH) form a helical membrane-spanning segment. Position 435 (Cys-435) interacts with heme.

The protein belongs to the cytochrome P450 family. Heme is required as a cofactor.

The protein resides in the membrane. In terms of biological role, cytochrome P450 monooxygenase; part of the gene cluster that mediates the biosynthesis of antifungal fernane-type triterpenoid polytolypin. PolD doe not seem to be involved in the biosynthesis of polytolypin. Within the pathway, the triterpene cyclase polA first catalyzes the cyclization of 2,3-oxidosqualene to motiol, polc converts the 4-alpha-methyl group of motiol to a carboxyl group, polB is responsible for appending a hydroxyl group at the 2-alpha position and polE is a dual functional P450, which can catalyze the formation of both the 1-beta-hydroxyl group and 10-beta-carboxyl group. This chain is Cytochrome P450 monooxygenase polD, found in Polytolypa hystricis (strain UAMH7299).